An 81-amino-acid chain; its full sequence is Sulfur carrier protein TusA (81 aa).

The active-site Cysteine persulfide intermediate is the Cys19.

It belongs to the sulfur carrier protein TusA family. As to quaternary structure, interacts with IscS.

The protein localises to the cytoplasm. The protein operates within tRNA modification. Its function is as follows. Sulfur carrier protein involved in sulfur trafficking in the cell. Part of a sulfur-relay system required for 2-thiolation during synthesis of 2-thiouridine of the modified wobble base 5-methylaminomethyl-2-thiouridine (mnm(5)s(2)U) in tRNA. Interacts with IscS and stimulates its cysteine desulfurase activity. Accepts an activated sulfur from IscS, which is then transferred to TusD, and thus determines the direction of sulfur flow from IscS to 2-thiouridine formation. Also appears to be involved in sulfur transfer for the biosynthesis of molybdopterin. In Escherichia fergusonii (strain ATCC 35469 / DSM 13698 / CCUG 18766 / IAM 14443 / JCM 21226 / LMG 7866 / NBRC 102419 / NCTC 12128 / CDC 0568-73), this protein is Sulfur carrier protein TusA.